Reading from the N-terminus, the 227-residue chain is Ribonuclease 3 (227 aa).

The 126-residue stretch at 7 to 132 folds into the RNase III domain; the sequence is LTAFMDRLGY…VIAAVYLDGG (126 aa). E45 serves as a coordination point for Mg(2+). D49 is a catalytic residue. Residues D118 and E121 each coordinate Mg(2+). E121 is an active-site residue. The DRBM domain maps to 157–226; sequence DAKTALQEWA…AKDLLAQLAG (70 aa).

Belongs to the ribonuclease III family. Homodimer. Mg(2+) serves as cofactor.

It localises to the cytoplasm. The catalysed reaction is Endonucleolytic cleavage to 5'-phosphomonoester.. In terms of biological role, digests double-stranded RNA. Involved in the processing of primary rRNA transcript to yield the immediate precursors to the large and small rRNAs (23S and 16S). Processes some mRNAs, and tRNAs when they are encoded in the rRNA operon. Processes pre-crRNA and tracrRNA of type II CRISPR loci if present in the organism. This is Ribonuclease 3 from Jannaschia sp. (strain CCS1).